Reading from the N-terminus, the 118-residue chain is Large ribosomal subunit protein bL20 (118 aa).

This sequence belongs to the bacterial ribosomal protein bL20 family.

Functionally, binds directly to 23S ribosomal RNA and is necessary for the in vitro assembly process of the 50S ribosomal subunit. It is not involved in the protein synthesizing functions of that subunit. The protein is Large ribosomal subunit protein bL20 of Phenylobacterium zucineum (strain HLK1).